The primary structure comprises 249 residues: Cytoplasmic envelopment protein 1 (249 aa).

Belongs to the herpesviridae cytoplasmic envelopment protein 1 family.

It localises to the virion. Its subcellular location is the virion tegument. The protein localises to the host cytoplasm. The protein resides in the host Golgi apparatus. Its function is as follows. Plays a critical role in cytoplasmic virus egress. Participates in the final step of tegumentation and envelope acquisition within the host cytoplasm. This chain is Cytoplasmic envelopment protein 1 (UL103), found in Homo sapiens (Human).